The following is a 436-amino-acid chain: 3-ketoacyl-CoA thiolase (436 aa).

C99 serves as the catalytic Acyl-thioester intermediate. Residues H392 and C422 each act as proton acceptor in the active site.

Belongs to the thiolase-like superfamily. Thiolase family. In terms of assembly, heterotetramer of two alpha chains (FadJ) and two beta chains (FadI).

It localises to the cytoplasm. The enzyme catalyses an acyl-CoA + acetyl-CoA = a 3-oxoacyl-CoA + CoA. It functions in the pathway lipid metabolism; fatty acid beta-oxidation. In terms of biological role, catalyzes the final step of fatty acid oxidation in which acetyl-CoA is released and the CoA ester of a fatty acid two carbons shorter is formed. The sequence is that of 3-ketoacyl-CoA thiolase from Shewanella sp. (strain W3-18-1).